The chain runs to 129 residues: Lysozyme C, milk isozyme (129 aa).

A C-type lysozyme domain is found at 1–129 (KVFSKCELAH…LSEYLASCNL (129 aa)). 4 disulfides stabilise this stretch: C6–C127, C30–C115, C65–C80, and C76–C94. Active-site residues include E35 and D53. Residues K82, D85, N87, D90, and D91 each contribute to the Ca(2+) site.

It belongs to the glycosyl hydrolase 22 family. In terms of assembly, monomer. Requires Ca(2+) as cofactor.

It carries out the reaction Hydrolysis of (1-&gt;4)-beta-linkages between N-acetylmuramic acid and N-acetyl-D-glucosamine residues in a peptidoglycan and between N-acetyl-D-glucosamine residues in chitodextrins.. In terms of biological role, lysozymes have primarily a bacteriolytic function; those in tissues and body fluids are associated with the monocyte-macrophage system and enhance the activity of immunoagents. This chain is Lysozyme C, milk isozyme (LYZ), found in Equus caballus (Horse).